The chain runs to 191 residues: dCTP deaminase (191 aa).

DCTP contacts are provided by residues 112–117 (KSTYAR), 136–138 (TLE), Gln-157, Tyr-173, and Gln-183. Glu-138 (proton donor/acceptor) is an active-site residue.

The protein belongs to the dCTP deaminase family. Homotrimer.

It carries out the reaction dCTP + H2O + H(+) = dUTP + NH4(+). It participates in pyrimidine metabolism; dUMP biosynthesis; dUMP from dCTP (dUTP route): step 1/2. Functionally, catalyzes the deamination of dCTP to dUTP. The chain is dCTP deaminase from Xylella fastidiosa (strain 9a5c).